The primary structure comprises 747 residues: Protein tyrosine phosphatase domain-containing protein 1 (747 aa).

Residues 1–36 (MAAGVLPQNEDPYSTLVNSSGHAAHMDENSGRPAPK) are disordered. Positions 11–21 (DPYSTLVNSSG) are enriched in polar residues. The 172-residue stretch at 82-253 (YSSWVTDNIL…LAPLRNIFSC (172 aa)) folds into the Tyrosine-protein phosphatase domain. Catalysis depends on cysteine 190, which acts as the Phosphocysteine intermediate. A phosphoserine mark is found at serine 392, serine 394, and serine 543. The tract at residues 549-570 (SSPKAQFPHGQETQDSTDLSEA) is disordered.

The protein belongs to the protein-tyrosine phosphatase family. Non-receptor class PTPDC1 subfamily.

Its function is as follows. May play roles in cilia formation and/or maintenance. The sequence is that of Protein tyrosine phosphatase domain-containing protein 1 (Ptpdc1) from Mus musculus (Mouse).